Here is a 318-residue protein sequence, read N- to C-terminus: 2-methyl-6-phytyl-1,4-hydroquinone methyltransferase (318 aa).

The first 39 residues, 1 to 39 (MPEYLLLPAGLISLSLAIAAGLYLLTARGYQSSDSVANA), serve as a signal peptide directing secretion. The tract at residues 97 to 106 (VLDVGCGIGG) is SAM motif I. The tract at residues 157-165 (GSFDVVWSV) is SAM motif II. The segment at 184–193 (VVKPGGILVV) is SAM motif III.

The protein belongs to the class I-like SAM-binding methyltransferase superfamily. gTMT family.

The catalysed reaction is 2-methyl-6-phytyl-1,4-benzene-1,4-diol + S-adenosyl-L-methionine = 2,3-dimethyl-6-phytylbenzene-1,4-diol + S-adenosyl-L-homocysteine + H(+). It carries out the reaction 2-methyl-6-(all-trans-nonaprenyl)benzene-1,4-diol + S-adenosyl-L-methionine = plastoquinol-9 + S-adenosyl-L-homocysteine + H(+). It catalyses the reaction 6-geranylgeranyl-2-methylbenzene-1,4-diol + S-adenosyl-L-methionine = 6-geranylgeranyl-2,3-dimethylbenzene-1,4-diol + S-adenosyl-L-homocysteine + H(+). It participates in cofactor biosynthesis; tocopherol biosynthesis. Its function is as follows. Involved in a key methylation step in both tocopherol (vitamin E) and plastoquinone synthesis. Catalyzes the conversion of 2-methyl-6-phytyl-1,4-hydroquinol (MPBQ) to 2,3-dimethyl-6-phytyl-1,4-hydroquinol (DMPQ, a substrate for tocopherol cyclase), and 2-methyl-6-solanyl-1,4-benzoquinol (MSBQ) to plastoquinol. The chain is 2-methyl-6-phytyl-1,4-hydroquinone methyltransferase from Synechocystis sp. (strain ATCC 27184 / PCC 6803 / Kazusa).